A 734-amino-acid polypeptide reads, in one-letter code: MALRFPRFSQGLAQDPTTRRIWFGIATAHDFESHDDITEERLYQNIFASHFGQLAIIFLWTSGNLFHVAWQGNFESWVQDPLHVRPIAHAIWDPHFGQPAVEAFTRGGAPGPVNIAYSGVYQWWYTIGLRTNEDLYTGALFLLFISAISLIAGWLHLQPKWKPSVSWFKNAESRLNHHLSGLFGVSSLAWTGHLVHVAIPASRGESVRWNNFLDVLPHPQGLGPLFTGQWNLYAQNPDSSSHLFGTSQGAGTAILTLLGGFHPQTQSLWLTDMAHHHLAIAFIFLIAGHMYRTNFGIGHSMKDLLDAHIPPGGRLGRGHKGLYDTINNSIHFQLGLALASLGVITSLVAQHMYSLPAYAFIAQDFTTQAALYTHHQYIAGFIMTGAFAHGAIFFIRDYNPEQNEDNVLARMLEHKEAIISHLSWASLFLGFHTLGLYVHNDVMLAFGTPEKQILIEPIFAQWIQSAHGKTSYGFDILLSSTSGPAFNAGRSIWLPGWLNAVNENSNSLFLTIGPGDFLVHHAIALGLHTTTLILVKGALDARGSKLMPDKKDFGYSFPCDGPGRGGTCDISAWDAFYLAVFWMLNTIGWVTFYWHWKHITLWQGNVSQFNESSTYLMGWLRDYLWLNSSQLINGYNPFGMNSLSVWAWMFLFGHLVWATGFMFLISWRGYWQELIETLAWAHERTPLANLIRWRDKPVALSIVQARLVGLAHFSVGYIFTYAAFLIASTSGKFG.

8 helical membrane-spanning segments follow: residues 46–69, 135–158, 175–199, 273–291, 330–353, 369–395, 417–439, and 517–535; these read IFAS…FHVA, LYTG…LHLQ, LNHH…HVAI, MAHH…GHMY, IHFQ…QHMY, AALY…IFFI, AIIS…LYVH, and FLVH…LILV. [4Fe-4S] cluster-binding residues include cysteine 559 and cysteine 568. The next 2 helical transmembrane spans lie at 575 to 596 and 643 to 665; these read AFYL…YWHW and LSVW…MFLI. Residues histidine 654, methionine 662, and tyrosine 670 each contribute to the chlorophyll a site. A phylloquinone-binding site is contributed by tryptophan 671. The chain crosses the membrane as a helical span at residues 707–727; it reads LVGLAHFSVGYIFTYAAFLIA.

Belongs to the PsaA/PsaB family. In terms of assembly, the PsaA/B heterodimer binds the P700 chlorophyll special pair and subsequent electron acceptors. PSI consists of a core antenna complex that captures photons, and an electron transfer chain that converts photonic excitation into a charge separation. The eukaryotic PSI reaction center is composed of at least 11 subunits. P700 is a chlorophyll a/chlorophyll a' dimer, A0 is one or more chlorophyll a, A1 is one or both phylloquinones and FX is a shared 4Fe-4S iron-sulfur center. serves as cofactor.

The protein resides in the plastid. Its subcellular location is the chloroplast thylakoid membrane. It catalyses the reaction reduced [plastocyanin] + hnu + oxidized [2Fe-2S]-[ferredoxin] = oxidized [plastocyanin] + reduced [2Fe-2S]-[ferredoxin]. Its function is as follows. PsaA and PsaB bind P700, the primary electron donor of photosystem I (PSI), as well as the electron acceptors A0, A1 and FX. PSI is a plastocyanin-ferredoxin oxidoreductase, converting photonic excitation into a charge separation, which transfers an electron from the donor P700 chlorophyll pair to the spectroscopically characterized acceptors A0, A1, FX, FA and FB in turn. Oxidized P700 is reduced on the lumenal side of the thylakoid membrane by plastocyanin. This chain is Photosystem I P700 chlorophyll a apoprotein A2, found in Helianthus annuus (Common sunflower).